Reading from the N-terminus, the 149-residue chain is Large ribosomal subunit protein bL9 (149 aa).

It belongs to the bacterial ribosomal protein bL9 family.

Binds to the 23S rRNA. This chain is Large ribosomal subunit protein bL9, found in Vibrio vulnificus (strain CMCP6).